A 231-amino-acid chain; its full sequence is Orotidine 5'-phosphate decarboxylase (231 aa).

Substrate is bound by residues Asp11, Lys33, 60 to 69 (DLKFHDIPNT), Thr120, Arg181, Gln190, Gly210, and Arg211. Residue Lys62 is the Proton donor of the active site.

This sequence belongs to the OMP decarboxylase family. Type 1 subfamily. Homodimer.

The catalysed reaction is orotidine 5'-phosphate + H(+) = UMP + CO2. The protein operates within pyrimidine metabolism; UMP biosynthesis via de novo pathway; UMP from orotate: step 2/2. Its function is as follows. Catalyzes the decarboxylation of orotidine 5'-monophosphate (OMP) to uridine 5'-monophosphate (UMP). This chain is Orotidine 5'-phosphate decarboxylase, found in Colwellia psychrerythraea (strain 34H / ATCC BAA-681) (Vibrio psychroerythus).